The following is a 1460-amino-acid chain: DNA-directed RNA polymerase III subunit RPC1 (1460 aa).

The Zn(2+) site is built by cysteine 67, cysteine 70, cysteine 77, histidine 80, cysteine 107, cysteine 110, and cysteine 154. Mg(2+) is bound by residues aspartate 511, aspartate 513, and aspartate 515. The segment at 858–870 is bridging helix; it reads PPEFLFHAISGRE.

It belongs to the RNA polymerase beta' chain family. Component of the RNA polymerase III (Pol III) complex consisting of 17 subunits.

The protein resides in the nucleus. The catalysed reaction is RNA(n) + a ribonucleoside 5'-triphosphate = RNA(n+1) + diphosphate. In terms of biological role, DNA-dependent RNA polymerase catalyzes the transcription of DNA into RNA using the four ribonucleoside triphosphates as substrates. Largest and catalytic core component of RNA polymerase III which synthesizes small RNAs, such as 5S rRNA and tRNAs. Forms the polymerase active center together with the second largest subunit. A single-stranded DNA template strand of the promoter is positioned within the central active site cleft of Pol III. A bridging helix emanates from RPC1 and crosses the cleft near the catalytic site and is thought to promote translocation of Pol III by acting as a ratchet that moves the RNA-DNA hybrid through the active site by switching from straight to bent conformations at each step of nucleotide addition. The protein is DNA-directed RNA polymerase III subunit RPC1 (RPO31) of Saccharomyces cerevisiae (strain ATCC 204508 / S288c) (Baker's yeast).